We begin with the raw amino-acid sequence, 333 residues long: Glyceraldehyde-3-phosphate dehydrogenase (333 aa).

Residue serine 1 is modified to N-acetylserine. Residues arginine 10 to isoleucine 11, aspartate 31, and serine 118 each bind NAD(+). D-glyceraldehyde 3-phosphate is bound by residues serine 147–threonine 149, threonine 178, threonine 207–glycine 208, and arginine 230. Cysteine 148 acts as the Nucleophile in catalysis. Asparagine 312 contributes to the NAD(+) binding site.

This sequence belongs to the glyceraldehyde-3-phosphate dehydrogenase family. As to quaternary structure, homotetramer.

It is found in the cytoplasm. The enzyme catalyses D-glyceraldehyde 3-phosphate + phosphate + NAD(+) = (2R)-3-phospho-glyceroyl phosphate + NADH + H(+). The protein operates within carbohydrate degradation; glycolysis; pyruvate from D-glyceraldehyde 3-phosphate: step 1/5. The polypeptide is Glyceraldehyde-3-phosphate dehydrogenase (Homarus americanus (American lobster)).